A 157-amino-acid chain; its full sequence is Cyclic pyranopterin monophosphate synthase (157 aa).

Substrate contacts are provided by residues 74 to 76 (MCH) and 112 to 113 (ME). The active site involves Asp127.

The protein belongs to the MoaC family. As to quaternary structure, homohexamer; trimer of dimers.

The enzyme catalyses (8S)-3',8-cyclo-7,8-dihydroguanosine 5'-triphosphate = cyclic pyranopterin phosphate + diphosphate. The protein operates within cofactor biosynthesis; molybdopterin biosynthesis. Its function is as follows. Catalyzes the conversion of (8S)-3',8-cyclo-7,8-dihydroguanosine 5'-triphosphate to cyclic pyranopterin monophosphate (cPMP). The polypeptide is Cyclic pyranopterin monophosphate synthase (Campylobacter jejuni subsp. jejuni serotype O:23/36 (strain 81-176)).